The chain runs to 1939 residues: Myosin-1 (1939 aa).

One can recognise a Myosin N-terminal SH3-like domain in the interval 33-82; it reads DAKTSVFVAEPKESFVKGTVQSREGGKVTVKTEAGATLTVKEDQVFPMNP. A phosphothreonine mark is found at threonine 64 and threonine 69. One can recognise a Myosin motor domain in the interval 86–782; sequence DKIEDMAMMT…LLGLLEEMRD (697 aa). Lysine 130 carries the post-translational modification N6,N6,N6-trimethyllysine. 179–186 serves as a coordination point for ATP; that stretch reads GESGAGKT. Residue tyrosine 389 is modified to Phosphotyrosine. At threonine 419 the chain carries Phosphothreonine. Residue tyrosine 424 is modified to Phosphotyrosine. Residues 659 to 681 are actin-binding; the sequence is LNKLMTNLRSTHPHFVRCIIPNE. The residue at position 757 (histidine 757) is a Pros-methylhistidine. Residues 761-775 are actin-binding; that stretch reads KFGHTKVFFKAGLLG. Residues 785-814 form the IQ domain; sequence LAQLITRTQARCRGFLARVEYQKMVERRES. Residues 843–1939 adopt a coiled-coil conformation; the sequence is LLKSAETEKE…EVHTKIISEE (1097 aa). Phosphoserine occurs at positions 1092 and 1096. Disordered stretches follow at residues 1125-1147 and 1153-1172; these read EIEA…SREL and RLEE…KKRE. The segment covering 1128–1147 has biased composition (basic and acidic residues); that stretch reads AERASRAKAEKQRSDLSREL. 2 positions are modified to phosphoserine: serine 1162 and serine 1237. Threonine 1241 carries the phosphothreonine modification. Serine 1243 carries the post-translational modification Phosphoserine. Threonine 1255 carries the post-translational modification Phosphothreonine. Serine 1261 carries the post-translational modification Phosphoserine. Phosphothreonine occurs at positions 1265 and 1286. Phosphoserine is present on residues serine 1288, serine 1292, serine 1303, and serine 1306. The residue at position 1464 (tyrosine 1464) is a Phosphotyrosine. At threonine 1467 the chain carries Phosphothreonine. Serine 1474 carries the phosphoserine modification. Phosphotyrosine is present on tyrosine 1492. Position 1495 is a phosphoserine (serine 1495). A Phosphothreonine modification is found at threonine 1501. Serine 1514 bears the Phosphoserine mark. A Phosphothreonine modification is found at threonine 1517. Phosphoserine occurs at positions 1542, 1554, 1574, 1600, 1603, 1714, and 1726. Threonine 1730 and threonine 1736 each carry phosphothreonine. At serine 1739 the chain carries Phosphoserine.

Belongs to the TRAFAC class myosin-kinesin ATPase superfamily. Myosin family. In terms of assembly, muscle myosin is a hexameric protein that consists of 2 heavy chain subunits (MHC), 2 alkali light chain subunits (MLC) and 2 regulatory light chain subunits (MLC-2). Interacts with SLC26A5.

The protein resides in the cytoplasm. Its subcellular location is the myofibril. Its function is as follows. Required for normal hearing. It plays a role in cochlear amplification of auditory stimuli, likely through the positive regulation of prestin (SLC26A5) activity and outer hair cell (OHC) electromotility. This is Myosin-1 (MYH1) from Sus scrofa (Pig).